A 64-amino-acid polypeptide reads, in one-letter code: Disintegrin VLO5A (64 aa).

Residues 1–64 (NSGNPCCDPV…SDCPRNPYKD (64 aa)) enclose the Disintegrin domain. 4 disulfide bridges follow: Cys-6-Cys-29, Cys-20-Cys-26, Cys-25-Cys-50, and Cys-38-Cys-57. The short motif at 42–44 (VGD) is the Cell attachment site; atypical (VGD) element.

It belongs to the venom metalloproteinase (M12B) family. P-II subfamily. P-IIe sub-subfamily. Heterodimer with VLO5B; disulfide-linked. Expressed by the venom gland.

Its subcellular location is the secreted. Its function is as follows. Poor inhibitor of platelet aggregation. The disintegrin inhibits the adhesion of the alpha-4/beta-1 (ITGA4/ITGB1) integrin to VCAM-1. Inhibition on alpha-IIb/beta-3 (ITGA2B/ITGB3) is low. The polypeptide is Disintegrin VLO5A (Macrovipera lebetina obtusa (Levant blunt-nosed viper)).